Reading from the N-terminus, the 325-residue chain is LIM and senescent cell antigen-like-containing domain protein 1 (325 aa).

Residue alanine 2 is modified to N-acetylalanine. 5 LIM zinc-binding domains span residues 10–62, 71–121, 135–184, 193–243, and 252–303; these read CERC…CEHD, CHQC…CRPC, CQKC…CLPC, CGAC…CETH, and CFHC…CKKC.

Component of the heterotrimeric IPP (ILK-PINCH-PARVIN) complex composed of ILK, LIMS1/PINCH and PARVA; the complex binds to F-actin via the C-terminal tail of LIMS1 and the N-terminal region of PARVA, promoting F-actin filament bundling. Formation of the IPP complex is dependent on protein kinase C and precedes integrin-mediated cell adhesion and spreading. Competes with LIMS2 for interaction with ILK. Interacts with SH3/SH2 adapter NCK2, thereby linking the complex to cell surface receptors. Interacts (via LIM zinc-binding 5) with TGFB1I1.

It is found in the cell junction. The protein localises to the focal adhesion. The protein resides in the cell membrane. Functionally, within the IPP (ILK-PINCH-PARVIN) complex, binds to F-actin, promoting F-actin bundling, a process required to generate force for actin cytoskeleton reorganization and subsequent dynamic cell adhesion events such as cell spreading and migration. In Mus musculus (Mouse), this protein is LIM and senescent cell antigen-like-containing domain protein 1 (Lims1).